A 143-amino-acid polypeptide reads, in one-letter code: Large ribosomal subunit protein uL13 (143 aa).

This sequence belongs to the universal ribosomal protein uL13 family. Part of the 50S ribosomal subunit.

Functionally, this protein is one of the early assembly proteins of the 50S ribosomal subunit, although it is not seen to bind rRNA by itself. It is important during the early stages of 50S assembly. This is Large ribosomal subunit protein uL13 from Dehalococcoides mccartyi (strain CBDB1).